We begin with the raw amino-acid sequence, 206 residues long: Ribosomal RNA small subunit methyltransferase G (206 aa).

S-adenosyl-L-methionine contacts are provided by residues glycine 73, leucine 78, 124–125 (VE), and arginine 139.

Belongs to the methyltransferase superfamily. RNA methyltransferase RsmG family.

Its subcellular location is the cytoplasm. It catalyses the reaction guanosine(527) in 16S rRNA + S-adenosyl-L-methionine = N(7)-methylguanosine(527) in 16S rRNA + S-adenosyl-L-homocysteine. Functionally, specifically methylates the N7 position of guanine in position 527 of 16S rRNA. This is Ribosomal RNA small subunit methyltransferase G from Yersinia pseudotuberculosis serotype O:3 (strain YPIII).